A 252-amino-acid chain; its full sequence is Hydroxyacylglutathione hydrolase (252 aa).

Zn(2+) contacts are provided by His54, His56, Asp58, His59, His113, Asp132, and His170.

This sequence belongs to the metallo-beta-lactamase superfamily. Glyoxalase II family. In terms of assembly, monomer. The cofactor is Zn(2+).

It catalyses the reaction an S-(2-hydroxyacyl)glutathione + H2O = a 2-hydroxy carboxylate + glutathione + H(+). Its pathway is secondary metabolite metabolism; methylglyoxal degradation; (R)-lactate from methylglyoxal: step 2/2. Functionally, thiolesterase that catalyzes the hydrolysis of S-D-lactoyl-glutathione to form glutathione and D-lactic acid. The protein is Hydroxyacylglutathione hydrolase of Thermosynechococcus vestitus (strain NIES-2133 / IAM M-273 / BP-1).